Reading from the N-terminus, the 371-residue chain is UDP-N-acetylglucosamine--N-acetylmuramyl-(pentapeptide) pyrophosphoryl-undecaprenol N-acetylglucosamine transferase (371 aa).

Residues 15-17 (TGG), Asn-126, Arg-172, Ser-199, Ile-256, 275-280 (ALTVSE), and Gln-301 each bind UDP-N-acetyl-alpha-D-glucosamine.

The protein belongs to the glycosyltransferase 28 family. MurG subfamily.

It localises to the cell inner membrane. It catalyses the reaction di-trans,octa-cis-undecaprenyl diphospho-N-acetyl-alpha-D-muramoyl-L-alanyl-D-glutamyl-meso-2,6-diaminopimeloyl-D-alanyl-D-alanine + UDP-N-acetyl-alpha-D-glucosamine = di-trans,octa-cis-undecaprenyl diphospho-[N-acetyl-alpha-D-glucosaminyl-(1-&gt;4)]-N-acetyl-alpha-D-muramoyl-L-alanyl-D-glutamyl-meso-2,6-diaminopimeloyl-D-alanyl-D-alanine + UDP + H(+). It participates in cell wall biogenesis; peptidoglycan biosynthesis. Cell wall formation. Catalyzes the transfer of a GlcNAc subunit on undecaprenyl-pyrophosphoryl-MurNAc-pentapeptide (lipid intermediate I) to form undecaprenyl-pyrophosphoryl-MurNAc-(pentapeptide)GlcNAc (lipid intermediate II). This chain is UDP-N-acetylglucosamine--N-acetylmuramyl-(pentapeptide) pyrophosphoryl-undecaprenol N-acetylglucosamine transferase, found in Francisella tularensis subsp. holarctica (strain FTNF002-00 / FTA).